Here is a 209-residue protein sequence, read N- to C-terminus: Uracil phosphoribosyltransferase (209 aa).

Residues arginine 79, arginine 104, and 131–139 contribute to the 5-phospho-alpha-D-ribose 1-diphosphate site; that span reads DPMLATGGS. Uracil contacts are provided by residues isoleucine 194 and 199–201; that span reads GDA. 5-phospho-alpha-D-ribose 1-diphosphate is bound at residue aspartate 200.

This sequence belongs to the UPRTase family. The cofactor is Mg(2+).

It carries out the reaction UMP + diphosphate = 5-phospho-alpha-D-ribose 1-diphosphate + uracil. Its pathway is pyrimidine metabolism; UMP biosynthesis via salvage pathway; UMP from uracil: step 1/1. Allosterically activated by GTP. Catalyzes the conversion of uracil and 5-phospho-alpha-D-ribose 1-diphosphate (PRPP) to UMP and diphosphate. The polypeptide is Uracil phosphoribosyltransferase (Lactobacillus gasseri (strain ATCC 33323 / DSM 20243 / BCRC 14619 / CIP 102991 / JCM 1131 / KCTC 3163 / NCIMB 11718 / NCTC 13722 / AM63)).